The primary structure comprises 195 residues: Small ribosomal subunit protein uS4B (195 aa).

The 75-residue stretch at 107-181 (RRLQTQVYKL…VARRNAARKA (75 aa)) folds into the S4 RNA-binding domain. Residues 161–195 (TSPFGGARPGRVARRNAARKAEASGEAAEEAEDEE) are disordered. Lys180 is covalently cross-linked (Glycyl lysine isopeptide (Lys-Gly) (interchain with G-Cter in ubiquitin)). Residue Ser184 is modified to Phosphoserine.

This sequence belongs to the universal ribosomal protein uS4 family. Component of the small ribosomal subunit (SSU). Mature yeast ribosomes consist of a small (40S) and a large (60S) subunit. The 40S small subunit contains 1 molecule of ribosomal RNA (18S rRNA) and 33 different proteins (encoded by 57 genes). The large 60S subunit contains 3 rRNA molecules (25S, 5.8S and 5S rRNA) and 46 different proteins (encoded by 81 genes). Interacts with snoRNA U3. uS11 interacts with MPP10. Component of the ribosomal small subunit (SSU) processome composed of at least 40 protein subunits and snoRNA U3.

It localises to the cytoplasm. The protein localises to the nucleus. It is found in the nucleolus. In terms of biological role, component of the ribosome, a large ribonucleoprotein complex responsible for the synthesis of proteins in the cell. The small ribosomal subunit (SSU) binds messenger RNAs (mRNAs) and translates the encoded message by selecting cognate aminoacyl-transfer RNA (tRNA) molecules. The large subunit (LSU) contains the ribosomal catalytic site termed the peptidyl transferase center (PTC), which catalyzes the formation of peptide bonds, thereby polymerizing the amino acids delivered by tRNAs into a polypeptide chain. The nascent polypeptides leave the ribosome through a tunnel in the LSU and interact with protein factors that function in enzymatic processing, targeting, and the membrane insertion of nascent chains at the exit of the ribosomal tunnel. uS4 is involved in nucleolar processing of pre-18S ribosomal RNA and ribosome assembly. The polypeptide is Small ribosomal subunit protein uS4B (Saccharomyces cerevisiae (strain ATCC 204508 / S288c) (Baker's yeast)).